A 201-amino-acid polypeptide reads, in one-letter code: Ribonuclease HII (201 aa).

Positions 15–201 constitute an RNase H type-2 domain; sequence QRVAGVDEVG…FRPVRRFLEA (187 aa). Aspartate 21, glutamate 22, and aspartate 113 together coordinate a divalent metal cation.

Belongs to the RNase HII family. Mn(2+) serves as cofactor. It depends on Mg(2+) as a cofactor.

Its subcellular location is the cytoplasm. It carries out the reaction Endonucleolytic cleavage to 5'-phosphomonoester.. Endonuclease that specifically degrades the RNA of RNA-DNA hybrids. The polypeptide is Ribonuclease HII (Nitrosococcus oceani (strain ATCC 19707 / BCRC 17464 / JCM 30415 / NCIMB 11848 / C-107)).